The chain runs to 88 residues: MANSKSAKKRALQSEKRRQHNASRSSMLRTYVKKVIAAINAGDHATATAAFAVAQPIVDRMATKGLIHKNKAARYKSRLNAKIKALVA.

The segment covering 1-21 (MANSKSAKKRALQSEKRRQHN) has biased composition (basic residues). The disordered stretch occupies residues 1-26 (MANSKSAKKRALQSEKRRQHNASRSS).

It belongs to the bacterial ribosomal protein bS20 family.

Binds directly to 16S ribosomal RNA. The sequence is that of Small ribosomal subunit protein bS20 from Shewanella halifaxensis (strain HAW-EB4).